We begin with the raw amino-acid sequence, 529 residues long: Calcium/calmodulin-dependent protein kinase type II subunit gamma (529 aa).

Positions 14 to 272 (YQLFEELGKG…ADQALKHPWV (259 aa)) constitute a Protein kinase domain. ATP-binding positions include 20 to 28 (LGKGAFSVV) and Lys-43. Asp-136 serves as the catalytic Proton acceptor. The autoinhibitory domain stretch occupies residues 283 to 292 (HRQETVECLR). Phosphothreonine; by autocatalysis occurs at positions 287, 306, and 307. The calmodulin-binding stretch occupies residues 294–316 (FNARRKLKGAILTTMLVSRNFSA). Residues Ser-311, Ser-334, Ser-349, Ser-352, and Ser-455 each carry the phosphoserine modification. A disordered region spans residues 324-353 (KSDGGVKKRKSSSSVHLMPQSNNKNSLVSP). Residues 342 to 352 (PQSNNKNSLVS) are compositionally biased toward polar residues.

It belongs to the protein kinase superfamily. CAMK Ser/Thr protein kinase family. CaMK subfamily. CAMK2 is composed of 4 different chains: alpha (CAMK2A), beta (CAMK2B), gamma (CAMK2G), and delta (CAMK2D). The different isoforms assemble into homo- or heteromultimeric holoenzymes composed of 12 subunits with two hexameric rings stacked one on top of the other. In terms of processing, autophosphorylation of Thr-287 following activation by Ca(2+)/calmodulin. Phosphorylation of Thr-287 locks the kinase into an activated state.

The protein localises to the sarcoplasmic reticulum membrane. The enzyme catalyses L-seryl-[protein] + ATP = O-phospho-L-seryl-[protein] + ADP + H(+). It catalyses the reaction L-threonyl-[protein] + ATP = O-phospho-L-threonyl-[protein] + ADP + H(+). With respect to regulation, activated by Ca(2+)/calmodulin. Binding of calmodulin results in conformational change that relieves intrasteric autoinhibition and allows autophosphorylation of Thr-287 which turns the kinase in a constitutively active form and confers to the kinase a Ca(2+)-independent activity. In terms of biological role, calcium/calmodulin-dependent protein kinase that functions autonomously after Ca(2+)/calmodulin-binding and autophosphorylation, and is involved in sarcoplasmic reticulum Ca(2+) transport in skeletal muscle and may function in dendritic spine and synapse formation and neuronal plasticity. In slow-twitch muscles, is involved in regulation of sarcoplasmic reticulum (SR) Ca(2+) transport and in fast-twitch muscle participates in the control of Ca(2+) release from the SR through phosphorylation of the ryanodine receptor-coupling factor triadin. In the central nervous system, it is involved in the regulation of neurite formation and arborization. It may participate in the promotion of dendritic spine and synapse formation and maintenance of synaptic plasticity which enables long-term potentiation (LTP) and hippocampus-dependent learning. In response to interferon-gamma (IFN-gamma) stimulation, catalyzes phosphorylation of STAT1, stimulating the JAK-STAT signaling pathway. This is Calcium/calmodulin-dependent protein kinase type II subunit gamma (Camk2g) from Mus musculus (Mouse).